A 261-amino-acid chain; its full sequence is Cytochrome c oxidase subunit 3 (261 aa).

Residues 1-15 (MTHQTHAYHMVNPSP) lie on the Mitochondrial matrix side of the membrane. Residues 16-34 (WPLTGALSALLMTSGLIMW) traverse the membrane as a helical segment. Residues 35 to 40 (FHFNST) are Mitochondrial intermembrane-facing. A helical membrane pass occupies residues 41–66 (TLLMLGLTTNMLTMYQWWRDIIREST). At 67 to 72 (FQGHHT) the chain is on the mitochondrial matrix side. The chain crosses the membrane as a helical span at residues 73–105 (PNVQKGLRYGMILFIISEVLFFTGFFWAFYHSS). Over 106-128 (LAPTPELGGCWPPTGIHPLNPLE) the chain is Mitochondrial intermembrane. Residues 129–152 (VPLLNTSVLLASGVSITWAHHSLM) form a helical membrane-spanning segment. The Mitochondrial matrix segment spans residues 153 to 155 (EGN). The helical transmembrane segment at 156 to 183 (RNHMLQALFITIALGVYFTLLQASEYYE) threads the bilayer. Over 184–190 (APFTISD) the chain is Mitochondrial intermembrane. Residues 191-223 (GVYGSTFFVATGFHGLHVIIGSTFLIVCFFRQL) traverse the membrane as a helical segment. At 224–232 (KFHFTSSHH) the chain is on the mitochondrial matrix side. The helical transmembrane segment at 233–256 (FGFEAAAWYWHFVDVVWLFLYVSI) threads the bilayer. Residues 257-261 (YWWGS) lie on the Mitochondrial intermembrane side of the membrane.

Belongs to the cytochrome c oxidase subunit 3 family. In terms of assembly, component of the cytochrome c oxidase (complex IV, CIV), a multisubunit enzyme composed of 14 subunits. The complex is composed of a catalytic core of 3 subunits MT-CO1, MT-CO2 and MT-CO3, encoded in the mitochondrial DNA, and 11 supernumerary subunits COX4I, COX5A, COX5B, COX6A, COX6B, COX6C, COX7A, COX7B, COX7C, COX8 and NDUFA4, which are encoded in the nuclear genome. The complex exists as a monomer or a dimer and forms supercomplexes (SCs) in the inner mitochondrial membrane with NADH-ubiquinone oxidoreductase (complex I, CI) and ubiquinol-cytochrome c oxidoreductase (cytochrome b-c1 complex, complex III, CIII), resulting in different assemblies (supercomplex SCI(1)III(2)IV(1) and megacomplex MCI(2)III(2)IV(2)).

Its subcellular location is the mitochondrion inner membrane. The enzyme catalyses 4 Fe(II)-[cytochrome c] + O2 + 8 H(+)(in) = 4 Fe(III)-[cytochrome c] + 2 H2O + 4 H(+)(out). In terms of biological role, component of the cytochrome c oxidase, the last enzyme in the mitochondrial electron transport chain which drives oxidative phosphorylation. The respiratory chain contains 3 multisubunit complexes succinate dehydrogenase (complex II, CII), ubiquinol-cytochrome c oxidoreductase (cytochrome b-c1 complex, complex III, CIII) and cytochrome c oxidase (complex IV, CIV), that cooperate to transfer electrons derived from NADH and succinate to molecular oxygen, creating an electrochemical gradient over the inner membrane that drives transmembrane transport and the ATP synthase. Cytochrome c oxidase is the component of the respiratory chain that catalyzes the reduction of oxygen to water. Electrons originating from reduced cytochrome c in the intermembrane space (IMS) are transferred via the dinuclear copper A center (CU(A)) of subunit 2 and heme A of subunit 1 to the active site in subunit 1, a binuclear center (BNC) formed by heme A3 and copper B (CU(B)). The BNC reduces molecular oxygen to 2 water molecules using 4 electrons from cytochrome c in the IMS and 4 protons from the mitochondrial matrix. In Litocranius walleri (Gerenuk), this protein is Cytochrome c oxidase subunit 3 (MT-CO3).